Here is a 324-residue protein sequence, read N- to C-terminus: Stomatin-like protein stl-1 (324 aa).

The protein belongs to the band 7/mec-2 family. Widely expressed in most tissues, including body wall muscles, intestinal epithelia, and pharynx and head neurons.

Its subcellular location is the mitochondrion. Functionally, mitochondrial protein that probably regulates the biogenesis and the activity of mitochondria. In neurons, involved in mitochondrial fusion and recovery of normal locomotory behavior during reoxygenation; probably acts independently of egl-9 and the canonical hypoxia response pathway. The polypeptide is Stomatin-like protein stl-1 (Caenorhabditis elegans).